A 131-amino-acid chain; its full sequence is D-ribose pyranase (131 aa).

Histidine 20 serves as the catalytic Proton donor. Substrate contacts are provided by residues aspartate 28, histidine 98, and 120 to 122; that span reads YAN.

The protein belongs to the RbsD / FucU family. RbsD subfamily. In terms of assembly, homodecamer.

Its subcellular location is the cytoplasm. It carries out the reaction beta-D-ribopyranose = beta-D-ribofuranose. It participates in carbohydrate metabolism; D-ribose degradation; D-ribose 5-phosphate from beta-D-ribopyranose: step 1/2. Catalyzes the interconversion of beta-pyran and beta-furan forms of D-ribose. This chain is D-ribose pyranase, found in Bacillus velezensis (strain DSM 23117 / BGSC 10A6 / LMG 26770 / FZB42) (Bacillus amyloliquefaciens subsp. plantarum).